The following is a 201-amino-acid chain: Large ribosomal subunit protein uL4 (201 aa).

Positions 44–68 (RAQKSRADVSGSGRKPWRQKGTGRA) are disordered.

The protein belongs to the universal ribosomal protein uL4 family. As to quaternary structure, part of the 50S ribosomal subunit.

In terms of biological role, one of the primary rRNA binding proteins, this protein initially binds near the 5'-end of the 23S rRNA. It is important during the early stages of 50S assembly. It makes multiple contacts with different domains of the 23S rRNA in the assembled 50S subunit and ribosome. Its function is as follows. Forms part of the polypeptide exit tunnel. The chain is Large ribosomal subunit protein uL4 from Buchnera aphidicola subsp. Schizaphis graminum (strain Sg).